The primary structure comprises 60 residues: Large ribosomal subunit protein uL30 (60 aa).

The protein belongs to the universal ribosomal protein uL30 family. In terms of assembly, part of the 50S ribosomal subunit.

In Streptomyces griseus subsp. griseus (strain JCM 4626 / CBS 651.72 / NBRC 13350 / KCC S-0626 / ISP 5235), this protein is Large ribosomal subunit protein uL30.